Reading from the N-terminus, the 174-residue chain is Small ribosomal subunit protein uS5 (174 aa).

The region spanning 19–82 (LREKMVAINR…DEARRKLKKI (64 aa)) is the S5 DRBM domain.

This sequence belongs to the universal ribosomal protein uS5 family. In terms of assembly, part of the 30S ribosomal subunit. Contacts proteins S4 and S8.

Functionally, with S4 and S12 plays an important role in translational accuracy. Its function is as follows. Located at the back of the 30S subunit body where it stabilizes the conformation of the head with respect to the body. In Aromatoleum aromaticum (strain DSM 19018 / LMG 30748 / EbN1) (Azoarcus sp. (strain EbN1)), this protein is Small ribosomal subunit protein uS5.